We begin with the raw amino-acid sequence, 224 residues long: dTTP/UTP pyrophosphatase (224 aa).

D77 serves as the catalytic Proton acceptor.

It belongs to the Maf family. YhdE subfamily. The cofactor is a divalent metal cation.

Its subcellular location is the cytoplasm. The enzyme catalyses dTTP + H2O = dTMP + diphosphate + H(+). It catalyses the reaction UTP + H2O = UMP + diphosphate + H(+). In terms of biological role, nucleoside triphosphate pyrophosphatase that hydrolyzes dTTP and UTP. May have a dual role in cell division arrest and in preventing the incorporation of modified nucleotides into cellular nucleic acids. This chain is dTTP/UTP pyrophosphatase, found in Dehalococcoides mccartyi (strain ATCC BAA-2266 / KCTC 15142 / 195) (Dehalococcoides ethenogenes (strain 195)).